Reading from the N-terminus, the 206-residue chain is Holliday junction branch migration complex subunit RuvA (206 aa).

The interval 1-63 (MIASLRGTVI…EDAMKLYGFI (63 aa)) is domain I. Residues 64–142 (DNESREMFSV…AFAAGVVDEA (79 aa)) are domain II. The interval 143-153 (GEQISLPNANI) is flexible linker. The interval 154–206 (ASEVVVEQVSQALVGLGFSEKQSDDAVSFVLAADPSLDTSGALRAALAKLSGK) is domain III.

This sequence belongs to the RuvA family. Homotetramer. Forms an RuvA(8)-RuvB(12)-Holliday junction (HJ) complex. HJ DNA is sandwiched between 2 RuvA tetramers; dsDNA enters through RuvA and exits via RuvB. An RuvB hexamer assembles on each DNA strand where it exits the tetramer. Each RuvB hexamer is contacted by two RuvA subunits (via domain III) on 2 adjacent RuvB subunits; this complex drives branch migration. In the full resolvosome a probable DNA-RuvA(4)-RuvB(12)-RuvC(2) complex forms which resolves the HJ.

It is found in the cytoplasm. Its function is as follows. The RuvA-RuvB-RuvC complex processes Holliday junction (HJ) DNA during genetic recombination and DNA repair, while the RuvA-RuvB complex plays an important role in the rescue of blocked DNA replication forks via replication fork reversal (RFR). RuvA specifically binds to HJ cruciform DNA, conferring on it an open structure. The RuvB hexamer acts as an ATP-dependent pump, pulling dsDNA into and through the RuvAB complex. HJ branch migration allows RuvC to scan DNA until it finds its consensus sequence, where it cleaves and resolves the cruciform DNA. The polypeptide is Holliday junction branch migration complex subunit RuvA (Corynebacterium glutamicum (strain R)).